The sequence spans 376 residues: Carboxylic ester hydrolase LipN (376 aa).

Residues Ser-216, Asp-316, and His-346 contribute to the active site.

Belongs to the 'GDXG' lipolytic enzyme family.

It is found in the cytoplasm. It catalyses the reaction a carboxylic ester + H2O = an alcohol + a carboxylate + H(+). The catalysed reaction is an acetyl ester + H2O = an aliphatic alcohol + acetate + H(+). It carries out the reaction a butanoate ester + H2O = an aliphatic alcohol + butanoate + H(+). The enzyme catalyses an octanoate ester + H2O = an aliphatic alcohol + octanoate + H(+). It catalyses the reaction decanoate ester + H2O = decanoate + an aliphatic alcohol + H(+). The catalysed reaction is a dodecanoate ester + H2O = an aliphatic alcohol + dodecanoate + H(+). It carries out the reaction 1,2,3-tributanoylglycerol + H2O = dibutanoylglycerol + butanoate + H(+). The enzyme catalyses 4-acetoxyphenol + H2O = hydroquinone + acetate + H(+). Its activity is regulated as follows. Completely inhibited by tetrahydrolipstatin (THL), RHC-80267 and N-bromosuccinimide. Non specific carboxylic ester hydrolase. Hydrolyzes various pNP-esters, with a preference for short carbon chain substrates. Can also hydrolyze tributyrin to di- and monobutyrin and 4-hydroxyphenylacetate to hydroquinone. In Mycobacterium tuberculosis (strain ATCC 25618 / H37Rv), this protein is Carboxylic ester hydrolase LipN.